A 1024-amino-acid polypeptide reads, in one-letter code: Multidrug resistance protein MdtC (1024 aa).

12 consecutive transmembrane segments (helical) span residues 12–32 (VATT…FSLL), 333–353 (EVER…FLFL), 360–380 (LIPA…MYLC), 387–407 (LSLM…IVVL), 431–451 (VGFT…PLLL), 463–483 (FAVT…TLTP), 528–548 (WVMV…ISIP), 853–873 (LWLI…LYES), 875–895 (VHPL…LLAL), 897–917 (LFDA…IGIV), 953–973 (PILM…ISSG), and 984–1004 (ITIV…TPVV).

This sequence belongs to the resistance-nodulation-cell division (RND) (TC 2.A.6) family. MdtC subfamily. In terms of assembly, part of a tripartite efflux system composed of MdtA, MdtB and MdtC. MdtC forms a heteromultimer with MdtB.

Its subcellular location is the cell inner membrane. The protein is Multidrug resistance protein MdtC of Yersinia enterocolitica serotype O:8 / biotype 1B (strain NCTC 13174 / 8081).